Consider the following 292-residue polypeptide: MTQQPPDVEEDDCLSEYHHLFCPDLLQDKVAFITGGGSGIGFRIAEIFMRHGCHTVIVSRSLPRVSEAAKKLVAATGKRCLPLSMDVRVPPAVMAAVDQALKEFGKIDILINCAAGNFLCPASALSFNAFKTVVDIDTLGTFNVSRVLYEKFFRDHGGVIVNITATLSMRGQVLQLHAGAAKAAVDAMTRHLAVEWGPQNIRVNSLAPGAISGTEGLRRLGGPKASSKFKYLSSPIPRLGTKTEIAHSVLYLASPLASYVSGIVLVVDGGSWMTLPNDIGRLLEFESSSAKL.

Residues 35–40 (GGGSGI), 60–64 (RSLPR), and aspartate 86 each bind NADP(+). Position 60 (arginine 60) interacts with substrate. Substrate is bound by residues arginine 88, phenylalanine 118, and 126 to 128 (SFN). Residue lysine 151 is modified to N6-acetyllysine. Residues lysine 182 and 208–214 (PGAISGT) each bind NADP(+). Residue arginine 219 coordinates substrate. At serine 287 the chain carries Phosphoserine. The Microbody targeting signal signature appears at 290–292 (AKL). Lysine 291 is subject to N6-acetyllysine.

It belongs to the short-chain dehydrogenases/reductases (SDR) family. 2,4-dienoyl-CoA reductase subfamily. Monomer, dimer and oligomer.

The protein resides in the peroxisome. The catalysed reaction is a (2E,4Z)-dienoyl-CoA + NADPH + H(+) = a 4,5-saturated-(3E)-enoyl-CoA + NADP(+). The enzyme catalyses a (2E,4E)-dienoyl-CoA + NADPH + H(+) = a 4,5-saturated-(3E)-enoyl-CoA + NADP(+). It catalyses the reaction (2E,4E)-hexadienoyl-CoA + NADPH + H(+) = (3E)-hexenoyl-CoA + NADP(+). It carries out the reaction (2E,4E)-decadienoyl-CoA + NADPH + H(+) = (3E)-decenoyl-CoA + NADP(+). The catalysed reaction is (2E,4Z,7Z,10Z,13Z,16Z,19Z)-docosaheptaenoyl-CoA + NADPH + H(+) = (3E,7Z,10Z,13Z,16Z,19Z)-docosahexaenoyl-CoA + NADP(+). Auxiliary enzyme of beta-oxidation. Participates in the degradation of unsaturated fatty enoyl-CoA esters having double bonds in both even- and odd-numbered positions in peroxisome. Catalyzes the NADP-dependent reduction of 2,4-dienoyl-CoA to yield trans-3-enoyl-CoA. Has activity towards short and medium chain 2,4-dienoyl-CoAs, but also towards 2,4,7,10,13,16,19-docosaheptaenoyl-CoA, suggesting that it does not constitute a rate limiting step in the peroxisomal degradation of docosahexaenoic acid. The sequence is that of Peroxisomal 2,4-dienoyl-CoA reductase [(3E)-enoyl-CoA-producing] (Decr2) from Rattus norvegicus (Rat).